A 190-amino-acid polypeptide reads, in one-letter code: Peptidyl-prolyl cis-trans isomerase FKBP20-1 (190 aa).

At glycine 2 the chain carries N-acetylglycine. A PPIase FKBP-type domain is found at 32 to 121 (LPVVDVHYEG…IFEVELVACR (90 aa)). A compositionally biased stretch (basic and acidic residues) spans 149 to 163 (AAAKEDDKKKREEAK). The tract at residues 149–190 (AAAKEDDKKKREEAKAAAAARIQAKLDAKKGPGKGKGKGKAK) is disordered. Basic residues predominate over residues 179–190 (GPGKGKGKGKAK).

It belongs to the FKBP-type PPIase family.

It catalyses the reaction [protein]-peptidylproline (omega=180) = [protein]-peptidylproline (omega=0). Its function is as follows. PPIases accelerate the folding of proteins. It catalyzes the cis-trans isomerization of proline imidic peptide bonds in oligopeptides. This Arabidopsis thaliana (Mouse-ear cress) protein is Peptidyl-prolyl cis-trans isomerase FKBP20-1 (FKBP20-1).